A 318-amino-acid polypeptide reads, in one-letter code: tRNA pseudouridine synthase B (318 aa).

Asp47 acts as the Nucleophile in catalysis.

This sequence belongs to the pseudouridine synthase TruB family. Type 1 subfamily.

It catalyses the reaction uridine(55) in tRNA = pseudouridine(55) in tRNA. Responsible for synthesis of pseudouridine from uracil-55 in the psi GC loop of transfer RNAs. This Shewanella putrefaciens (strain CN-32 / ATCC BAA-453) protein is tRNA pseudouridine synthase B.